Reading from the N-terminus, the 235-residue chain is Phosphoribosylaminoimidazole-succinocarboxamide synthase (235 aa).

It belongs to the SAICAR synthetase family.

The catalysed reaction is 5-amino-1-(5-phospho-D-ribosyl)imidazole-4-carboxylate + L-aspartate + ATP = (2S)-2-[5-amino-1-(5-phospho-beta-D-ribosyl)imidazole-4-carboxamido]succinate + ADP + phosphate + 2 H(+). The protein operates within purine metabolism; IMP biosynthesis via de novo pathway; 5-amino-1-(5-phospho-D-ribosyl)imidazole-4-carboxamide from 5-amino-1-(5-phospho-D-ribosyl)imidazole-4-carboxylate: step 1/2. The polypeptide is Phosphoribosylaminoimidazole-succinocarboxamide synthase (Thermoanaerobacter pseudethanolicus (strain ATCC 33223 / 39E) (Clostridium thermohydrosulfuricum)).